The primary structure comprises 190 residues: Heme-binding protein 1 (190 aa).

Belongs to the HEBP family. Monomer.

It localises to the cytoplasm. May bind free porphyrinogens that may be present in the cell and thus facilitate removal of these potentially toxic compound. Binds with a high affinity to one molecule of heme or porphyrins. It binds metalloporphyrins, free porphyrins and N-methylprotoporphyrin with similar affinities. In Xenopus tropicalis (Western clawed frog), this protein is Heme-binding protein 1 (hebp1).